The chain runs to 338 residues: Gibberellin 2-beta-dioxygenase 8 (338 aa).

The 100-residue stretch at 191–290 folds into the Fe2OG dioxygenase domain; it reads NTCYLRMNRY…RFSTAYFMCP (100 aa). Fe cation is bound by residues histidine 215, aspartate 217, and histidine 271. The active site involves arginine 281. 2-oxoglutarate is bound at residue arginine 281.

The protein belongs to the iron/ascorbate-dependent oxidoreductase family. GA2OX subfamily. Fe(2+) serves as cofactor.

It catalyses the reaction gibberellin A1 + 2-oxoglutarate + O2 = gibberellin A8 + succinate + CO2. It participates in plant hormone biosynthesis; gibberellin biosynthesis. In terms of biological role, catalyzes the 2-beta-hydroxylation of gibberellins (GA) precursors, rendering them unable to be converted to active GAs. Hydroxylates the C20-GA GA12 and GA53, but is not active on C19-GAs, like GA1, GA4, GA9 and GA20. The polypeptide is Gibberellin 2-beta-dioxygenase 8 (GA2OX8) (Arabidopsis thaliana (Mouse-ear cress)).